A 304-amino-acid polypeptide reads, in one-letter code: Acetyl-coenzyme A carboxylase carboxyl transferase subunit beta (304 aa).

The region spanning 26-295 (VWTKCTSCEQ…PFVEPELVEN (270 aa)) is the CoA carboxyltransferase N-terminal domain. Residues Cys30, Cys33, Cys49, and Cys52 each coordinate Zn(2+). The C4-type zinc-finger motif lies at 30–52 (CTSCEQVLYRDELRRHLEVCPKC). The disordered stretch occupies residues 281–304 (SNKPSPFVEPELVENEEQSKSDNE).

It belongs to the AccD/PCCB family. In terms of assembly, acetyl-CoA carboxylase is a heterohexamer composed of biotin carboxyl carrier protein (AccB), biotin carboxylase (AccC) and two subunits each of ACCase subunit alpha (AccA) and ACCase subunit beta (AccD). Zn(2+) is required as a cofactor.

It localises to the cytoplasm. It carries out the reaction N(6)-carboxybiotinyl-L-lysyl-[protein] + acetyl-CoA = N(6)-biotinyl-L-lysyl-[protein] + malonyl-CoA. The protein operates within lipid metabolism; malonyl-CoA biosynthesis; malonyl-CoA from acetyl-CoA: step 1/1. Component of the acetyl coenzyme A carboxylase (ACC) complex. Biotin carboxylase (BC) catalyzes the carboxylation of biotin on its carrier protein (BCCP) and then the CO(2) group is transferred by the transcarboxylase to acetyl-CoA to form malonyl-CoA. The sequence is that of Acetyl-coenzyme A carboxylase carboxyl transferase subunit beta from Pasteurella multocida (strain Pm70).